The following is a 732-amino-acid chain: Catalase-peroxidase (732 aa).

Basic and acidic residues predominate over residues 1–10 (MDAKTDDKAG). The disordered stretch occupies residues 1-26 (MDAKTDDKAGKCPVAHGPAPRGNRDW). Positions 95-217 (WHSAGTYRTT…LGAVQMGLIY (123 aa)) form a cross-link, tryptophyl-tyrosyl-methioninium (Trp-Tyr) (with M-243). His-96 functions as the Proton acceptor in the catalytic mechanism. Positions 217–243 (YVNPEGPNGNPDPLGSAKDIRETFARM) form a cross-link, tryptophyl-tyrosyl-methioninium (Tyr-Met) (with W-95). A heme b-binding site is contributed by His-258.

It belongs to the peroxidase family. Peroxidase/catalase subfamily. As to quaternary structure, homodimer or homotetramer. The cofactor is heme b. Formation of the three residue Trp-Tyr-Met cross-link is important for the catalase, but not the peroxidase activity of the enzyme.

The enzyme catalyses H2O2 + AH2 = A + 2 H2O. The catalysed reaction is 2 H2O2 = O2 + 2 H2O. In terms of biological role, bifunctional enzyme with both catalase and broad-spectrum peroxidase activity. The protein is Catalase-peroxidase of Rhodopseudomonas palustris (strain BisB18).